A 442-amino-acid chain; its full sequence is MPDSADTIYALSSGALPAGVAVIRISGAKAFIALRALTGRDLPLPRTASLCSIRNRNNEIIDQSLVIVFPAPNSFTGENCVEIHSHGSRAVMASIFAELDNLGGLRPADAGEFSRRAFENGKMDLLEVEGLADLLQAETEMQRRLAVEQSSGQLSALYDGWANRLTRARALIEAELDFADEEDVPDSVATQVWEAMAALKGEINAHLQGGGNGEIIRDGFKVALVGEPNAGKSTLLNALSGREVAIVTDIAGTTRDVLSVDINLDGYLVRIFDTAGIRETQDVVEREGVRRAVLTAETADLILILQDNDSTPKQSIGSFDNQRSLRVRTKTLLRSRASDDDFDLSISAKEGIGLDELRRALKREIEKRVGSGQTLVPARARHKKRLEETLNYVSDALDSETLDLAIRSEYLRLAATSLGRITGRVDVEDLLGVIFSEFCIGK.

The (6S)-5-formyl-5,6,7,8-tetrahydrofolate site is built by arginine 24, glutamate 82, and lysine 122. The region spanning 219–366 (GFKVALVGEP…LRRALKREIE (148 aa)) is the TrmE-type G domain. Asparagine 229 is a binding site for K(+). GTP contacts are provided by residues 229-234 (NAGKST), 248-254 (TDIAGTT), and 273-276 (DTAG). Serine 233 contacts Mg(2+). The K(+) site is built by threonine 248, isoleucine 250, and threonine 253. Threonine 254 is a Mg(2+) binding site. (6S)-5-formyl-5,6,7,8-tetrahydrofolate is bound at residue lysine 442.

The protein belongs to the TRAFAC class TrmE-Era-EngA-EngB-Septin-like GTPase superfamily. TrmE GTPase family. In terms of assembly, homodimer. Heterotetramer of two MnmE and two MnmG subunits. It depends on K(+) as a cofactor.

It localises to the cytoplasm. In terms of biological role, exhibits a very high intrinsic GTPase hydrolysis rate. Involved in the addition of a carboxymethylaminomethyl (cmnm) group at the wobble position (U34) of certain tRNAs, forming tRNA-cmnm(5)s(2)U34. This chain is tRNA modification GTPase MnmE, found in Agrobacterium fabrum (strain C58 / ATCC 33970) (Agrobacterium tumefaciens (strain C58)).